Reading from the N-terminus, the 152-residue chain is D-aminoacyl-tRNA deacylase (152 aa).

Residues 142 to 143 (GP) carry the Gly-cisPro motif, important for rejection of L-amino acids motif.

It belongs to the DTD family. As to quaternary structure, homodimer.

It localises to the cytoplasm. It catalyses the reaction glycyl-tRNA(Ala) + H2O = tRNA(Ala) + glycine + H(+). The catalysed reaction is a D-aminoacyl-tRNA + H2O = a tRNA + a D-alpha-amino acid + H(+). Functionally, an aminoacyl-tRNA editing enzyme that deacylates mischarged D-aminoacyl-tRNAs. Also deacylates mischarged glycyl-tRNA(Ala), protecting cells against glycine mischarging by AlaRS. Acts via tRNA-based rather than protein-based catalysis; rejects L-amino acids rather than detecting D-amino acids in the active site. By recycling D-aminoacyl-tRNA to D-amino acids and free tRNA molecules, this enzyme counteracts the toxicity associated with the formation of D-aminoacyl-tRNA entities in vivo and helps enforce protein L-homochirality. This Paraburkholderia xenovorans (strain LB400) protein is D-aminoacyl-tRNA deacylase.